The following is a 187-amino-acid chain: Endoribonuclease YbeY (187 aa).

Residues H148, H152, and H158 each coordinate Zn(2+).

This sequence belongs to the endoribonuclease YbeY family. Requires Zn(2+) as cofactor.

It is found in the cytoplasm. In terms of biological role, single strand-specific metallo-endoribonuclease involved in late-stage 70S ribosome quality control and in maturation of the 3' terminus of the 16S rRNA. The polypeptide is Endoribonuclease YbeY (Ralstonia nicotianae (strain ATCC BAA-1114 / GMI1000) (Ralstonia solanacearum)).